We begin with the raw amino-acid sequence, 429 residues long: MKKQRNLRSMAAQAVEQVVEQGQSLSNILPPLQQKVSDKDKALLQELCFGVLRTLSQLDWLINKLMARPMTGKQRTVHYLIMVGLYQLLYTRIPPHAALAETVEGAIAIKRPQLKGLINGVLRQFQRRQEELLAEFNTRDARYLHPSWLLKRLQKAYPEQWQSIAEANNQRPPMWLRINRTHHSRDSWLALLDEAGMKGFPHADYPDAVRLETPAPVHALPGFEDGWVTVQDASAQGCMTWLAPQNGEHILDLCAAPGGKTTHILEVAPEAQVVAVDIDEQRLSRVYDNLKRLGMKATVKQGDGRYPSQWCGEQQFDRILLDAPCSATGVIRRHPDIKWLRRDRDIPELAQLQSEILDAIWPHLKSGGTLVYATCSVLPEENSLQIKAFLQRTADAELCETGTPEQPGKQNQPGAEEGDGFFYAKLIKK.

S-adenosyl-L-methionine-binding positions include 254–260 (CAAPGGK), aspartate 277, aspartate 303, and aspartate 322. The Nucleophile role is filled by cysteine 375.

Belongs to the class I-like SAM-binding methyltransferase superfamily. RsmB/NOP family.

The protein localises to the cytoplasm. It catalyses the reaction cytidine(967) in 16S rRNA + S-adenosyl-L-methionine = 5-methylcytidine(967) in 16S rRNA + S-adenosyl-L-homocysteine + H(+). Functionally, specifically methylates the cytosine at position 967 (m5C967) of 16S rRNA. This Shigella flexneri serotype 5b (strain 8401) protein is Ribosomal RNA small subunit methyltransferase B.